A 203-amino-acid polypeptide reads, in one-letter code: Arcadin-2 (203 aa).

In terms of assembly, interacts with crenactin.

The protein localises to the cytoplasm. Its subcellular location is the cytoskeleton. Functionally, part of an actin-like archaeal cytoskeleton. Prevents polymerization of crenactin filaments by binding its C-terminus into crenactin's hydrophobic groove. May act by competing with the D-loop of the following crenactin subunit for the hydrophobic groove. In Pyrobaculum calidifontis (strain DSM 21063 / JCM 11548 / VA1), this protein is Arcadin-2.